The following is a 303-amino-acid chain: Endo-1,3;1,4-beta-D-glucanase (303 aa).

The N-terminal stretch at 1-43 (MPSSAQVLLCLAAVLAAAAATTAEAHSQCLDNPPDRSIHGRQL) is a signal peptide. Asn-115, Asn-197, and Asn-257 each carry an N-linked (GlcNAc...) asparagine glycan.

In terms of processing, glycosylated.

It is found in the secreted. In terms of biological role, plays a role in control of plant growth. Mediates specific degradation of cell wall (1,3)(1,4)-beta-D-glucans and is related to auxin-mediated growth and development of cereal coleoptiles. This chain is Endo-1,3;1,4-beta-D-glucanase, found in Zea mays (Maize).